The following is a 349-amino-acid chain: Peroxidase 23 (349 aa).

Residues 1–29 (MGFSSSLSCSAMGALIVGCLLLQASNSNA) form the signal peptide. Gln30 carries the post-translational modification Pyrrolidone carboxylic acid. 4 disulfide bridges follow: Cys40–Cys120, Cys73–Cys78, Cys126–Cys329, and Cys206–Cys238. His71 functions as the Proton acceptor in the catalytic mechanism. Ca(2+) contacts are provided by Asp72, Val75, Gly77, Asp79, and Ser81. A glycan (N-linked (GlcNAc...) asparagine) is linked at Asn86. Residue Pro168 coordinates substrate. Heme b is bound at residue His199. Thr200 is a Ca(2+) binding site. N-linked (GlcNAc...) asparagine glycosylation is found at Asn217 and Asn243. Ca(2+) contacts are provided by Asp251, Thr254, and Asp259.

It belongs to the peroxidase family. Classical plant (class III) peroxidase subfamily. The cofactor is heme b. Ca(2+) serves as cofactor.

It localises to the secreted. The protein resides in the vacuole. It catalyses the reaction 2 a phenolic donor + H2O2 = 2 a phenolic radical donor + 2 H2O. Removal of H(2)O(2), oxidation of toxic reductants, biosynthesis and degradation of lignin, suberization, auxin catabolism, response to environmental stresses such as wounding, pathogen attack and oxidative stress. These functions might be dependent on each isozyme/isoform in each plant tissue. In Arabidopsis thaliana (Mouse-ear cress), this protein is Peroxidase 23 (PER23).